A 448-amino-acid chain; its full sequence is Phosphoglucosamine mutase (448 aa).

Ser-102 functions as the Phosphoserine intermediate in the catalytic mechanism. 4 residues coordinate Mg(2+): Ser-102, Asp-241, Asp-243, and Asp-245. At Ser-102 the chain carries Phosphoserine.

It belongs to the phosphohexose mutase family. Mg(2+) serves as cofactor. In terms of processing, activated by phosphorylation.

It catalyses the reaction alpha-D-glucosamine 1-phosphate = D-glucosamine 6-phosphate. Its function is as follows. Catalyzes the conversion of glucosamine-6-phosphate to glucosamine-1-phosphate. The protein is Phosphoglucosamine mutase of Ruegeria pomeroyi (strain ATCC 700808 / DSM 15171 / DSS-3) (Silicibacter pomeroyi).